A 382-amino-acid polypeptide reads, in one-letter code: Nuclear hormone receptor family member nhr-106 (382 aa).

The nuclear receptor DNA-binding region spans 2–78 (QTTCEICEVP…MGMMPEKVKV (77 aa)). 2 NR C4-type zinc fingers span residues 5–25 (CEICEVPAHGIHFGAITCRGC) and 42–61 (CKYSSNCTNFTGKFPQCKSC). The NR LBD domain occupies 110–380 (DVSNLITRGL…FSNPEMFIDS (271 aa)).

The protein belongs to the nuclear hormone receptor family.

It is found in the nucleus. In terms of biological role, orphan nuclear receptor. This chain is Nuclear hormone receptor family member nhr-106 (nhr-106), found in Caenorhabditis elegans.